We begin with the raw amino-acid sequence, 238 residues long: tRNA (guanine-N(7)-)-methyltransferase (238 aa).

Residues Glu68, Glu93, Asp120, and Asp143 each contribute to the S-adenosyl-L-methionine site. Asp143 is an active-site residue. Substrate contacts are provided by residues Lys147, Asp179, and Thr216 to Glu219.

The protein belongs to the class I-like SAM-binding methyltransferase superfamily. TrmB family.

The enzyme catalyses guanosine(46) in tRNA + S-adenosyl-L-methionine = N(7)-methylguanosine(46) in tRNA + S-adenosyl-L-homocysteine. Its pathway is tRNA modification; N(7)-methylguanine-tRNA biosynthesis. Its function is as follows. Catalyzes the formation of N(7)-methylguanine at position 46 (m7G46) in tRNA. The sequence is that of tRNA (guanine-N(7)-)-methyltransferase from Stutzerimonas stutzeri (strain A1501) (Pseudomonas stutzeri).